The primary structure comprises 212 residues: Adenylate kinase (212 aa).

Gly-14–Thr-19 contributes to the ATP binding site. The tract at residues Ser-34–Val-63 is NMP. AMP contacts are provided by residues Thr-35, Arg-40, Ser-61–Val-63, Gly-89–Arg-92, and Gln-96. The segment at Gln-126–Asp-163 is LID. Arg-127 provides a ligand contact to ATP. Positions 130 and 133 each coordinate Zn(2+). An ATP-binding site is contributed by Ser-136 to Tyr-137. Positions 150 and 153 each coordinate Zn(2+). AMP-binding residues include Arg-160 and Arg-171. Gln-199 serves as a coordination point for ATP.

The protein belongs to the adenylate kinase family. As to quaternary structure, monomer.

The protein resides in the cytoplasm. It catalyses the reaction AMP + ATP = 2 ADP. Its pathway is purine metabolism; AMP biosynthesis via salvage pathway; AMP from ADP: step 1/1. In terms of biological role, catalyzes the reversible transfer of the terminal phosphate group between ATP and AMP. Plays an important role in cellular energy homeostasis and in adenine nucleotide metabolism. This is Adenylate kinase from Mesomycoplasma hyopneumoniae (strain 7448) (Mycoplasma hyopneumoniae).